Reading from the N-terminus, the 592-residue chain is Potassium-transporting ATPase potassium-binding subunit (592 aa).

10 helical membrane-spanning segments follow: residues 7–27, 60–80, 132–152, 175–195, 279–299, 310–330, 409–429, 449–469, 513–533, and 556–576; these read ILLG…GTYI, LKYA…VYAL, ALAV…IALI, LHVL…QGVI, LSNF…CFTF, WAVL…AMHF, GLYG…LMIG, IAIL…VMLA, VMLG…VLAI, and LFVT…YVPA.

It belongs to the KdpA family. As to quaternary structure, the system is composed of three essential subunits: KdpA, KdpB and KdpC.

It localises to the cell inner membrane. Part of the high-affinity ATP-driven potassium transport (or Kdp) system, which catalyzes the hydrolysis of ATP coupled with the electrogenic transport of potassium into the cytoplasm. This subunit binds the periplasmic potassium ions and delivers the ions to the membrane domain of KdpB through an intramembrane tunnel. The protein is Potassium-transporting ATPase potassium-binding subunit of Dechloromonas aromatica (strain RCB).